An 804-amino-acid polypeptide reads, in one-letter code: Elongation factor G, mitochondrial (804 aa).

Residues 1–9 constitute a mitochondrion transit peptide; the sequence is MVRPAQVRA. The 287-residue stretch at 103-389 folds into the tr-type G domain; it reads SKVRNIGIAA…GVCDYLPNPS (287 aa). Residues 112–119, 187–191, and 241–244 contribute to the GTP site; these read AHIDSGKT, DTPGH, and NKMD.

It belongs to the TRAFAC class translation factor GTPase superfamily. Classic translation factor GTPase family. EF-G/EF-2 subfamily.

Its subcellular location is the mitochondrion. The protein operates within protein biosynthesis; polypeptide chain elongation. Functionally, mitochondrial GTPase that catalyzes the GTP-dependent ribosomal translocation step during translation elongation. During this step, the ribosome changes from the pre-translocational (PRE) to the post-translocational (POST) state as the newly formed A-site-bound peptidyl-tRNA and P-site-bound deacylated tRNA move to the P and E sites, respectively. Catalyzes the coordinated movement of the two tRNA molecules, the mRNA and conformational changes in the ribosome. This Talaromyces stipitatus (strain ATCC 10500 / CBS 375.48 / QM 6759 / NRRL 1006) (Penicillium stipitatum) protein is Elongation factor G, mitochondrial (mef1).